Reading from the N-terminus, the 283-residue chain is Pantothenate synthetase (283 aa).

Residue 31–38 (MGALHDGH) participates in ATP binding. Catalysis depends on H38, which acts as the Proton donor. (R)-pantoate is bound at residue Q62. Beta-alanine is bound at residue Q62. Position 148-151 (148-151 (GKKD)) interacts with ATP. Residue Q154 participates in (R)-pantoate binding. ATP-binding positions include V177 and 185–188 (KSSR).

This sequence belongs to the pantothenate synthetase family. In terms of assembly, homodimer.

Its subcellular location is the cytoplasm. It carries out the reaction (R)-pantoate + beta-alanine + ATP = (R)-pantothenate + AMP + diphosphate + H(+). It participates in cofactor biosynthesis; (R)-pantothenate biosynthesis; (R)-pantothenate from (R)-pantoate and beta-alanine: step 1/1. Its function is as follows. Catalyzes the condensation of pantoate with beta-alanine in an ATP-dependent reaction via a pantoyl-adenylate intermediate. This is Pantothenate synthetase from Staphylococcus aureus (strain MRSA252).